Reading from the N-terminus, the 1387-residue chain is DNA-directed RNA polymerase subunit beta (1387 aa).

It belongs to the RNA polymerase beta chain family. The RNAP catalytic core consists of 2 alpha, 1 beta, 1 beta' and 1 omega subunit. When a sigma factor is associated with the core the holoenzyme is formed, which can initiate transcription.

The catalysed reaction is RNA(n) + a ribonucleoside 5'-triphosphate = RNA(n+1) + diphosphate. In terms of biological role, DNA-dependent RNA polymerase catalyzes the transcription of DNA into RNA using the four ribonucleoside triphosphates as substrates. This Xanthomonas campestris pv. campestris (strain 8004) protein is DNA-directed RNA polymerase subunit beta.